Here is a 169-residue protein sequence, read N- to C-terminus: Gastrula zinc finger protein XlCGF62.1 (169 aa).

6 C2H2-type zinc fingers span residues 6 to 28 (FICT…IRTH), 34 to 56 (FICT…YKTH), 62 to 84 (FICT…HRSH), 90 to 113 (FTCT…QAIH), 119 to 141 (FICT…KRTH), and 147 to 169 (FVCT…KRTH).

The protein belongs to the krueppel C2H2-type zinc-finger protein family.

It is found in the nucleus. Functionally, may be involved in transcriptional regulation. The polypeptide is Gastrula zinc finger protein XlCGF62.1 (Xenopus laevis (African clawed frog)).